A 412-amino-acid polypeptide reads, in one-letter code: Tryptophan 2,3-dioxygenase (412 aa).

Substrate is bound by residues 79 to 83 (FIVVH), Y146, and R150. H346 lines the heme pocket. Position 360 (T360) interacts with substrate.

The protein belongs to the tryptophan 2,3-dioxygenase family. Homotetramer. Requires heme as cofactor.

It catalyses the reaction L-tryptophan + O2 = N-formyl-L-kynurenine. It participates in amino-acid degradation; L-tryptophan degradation via kynurenine pathway; L-kynurenine from L-tryptophan: step 1/2. Functionally, heme-dependent dioxygenase that catalyzes the oxidative cleavage of the L-tryptophan (L-Trp) pyrrole ring and converts L-tryptophan to N-formyl-L-kynurenine. Catalyzes the oxidative cleavage of the indole moiety. The sequence is that of Tryptophan 2,3-dioxygenase from Sorangium cellulosum (strain So ce56) (Polyangium cellulosum (strain So ce56)).